Here is an 884-residue protein sequence, read N- to C-terminus: Protein translocase subunit SecA (884 aa).

ATP is bound by residues Gln88, 106–110, and Asp509; that span reads GEGKT. The segment at 822–884 is disordered; it reads EQKKLKMSGA…PKKGLFANND (63 aa). A compositionally biased stretch (basic and acidic residues) spans 833 to 842; that stretch reads KGGEDLEETK. Residues Cys858, Cys860, Cys869, and His870 each contribute to the Zn(2+) site.

The protein belongs to the SecA family. As to quaternary structure, monomer and homodimer. Part of the essential Sec protein translocation apparatus which comprises SecA, SecYEG and auxiliary proteins SecDF-YajC and YidC. Requires Zn(2+) as cofactor.

Its subcellular location is the cell inner membrane. It localises to the cytoplasm. The catalysed reaction is ATP + H2O + cellular proteinSide 1 = ADP + phosphate + cellular proteinSide 2.. Functionally, part of the Sec protein translocase complex. Interacts with the SecYEG preprotein conducting channel. Has a central role in coupling the hydrolysis of ATP to the transfer of proteins into and across the cell membrane, serving as an ATP-driven molecular motor driving the stepwise translocation of polypeptide chains across the membrane. In Campylobacter hominis (strain ATCC BAA-381 / DSM 21671 / CCUG 45161 / LMG 19568 / NCTC 13146 / CH001A), this protein is Protein translocase subunit SecA.